The primary structure comprises 169 residues: Glycine-rich RNA-binding protein GRP2A (169 aa).

Residues 8 to 86 form the RRM domain; sequence YRCFVGGLAW…RSITVNEAQS (79 aa). 2 disordered regions span residues 69–100 and 125–169; these read MNGQDLDGRSITVNEAQSRGSGAGGGGRGGGG and YSGG…GGGW. Residues 89 to 100 are compositionally biased toward gly residues; the sequence is SGAGGGGRGGGG.

In terms of tissue distribution, predominantly expressed in meristematic and growing tissue.

Its subcellular location is the nucleus. Functionally, may play a general role in circadian phenomena associated with meristematic tissue. This is Glycine-rich RNA-binding protein GRP2A from Sinapis alba (White mustard).